The chain runs to 349 residues: UPF0284 protein MM_0708 (349 aa).

It belongs to the UPF0284 family.

The protein is UPF0284 protein MM_0708 of Methanosarcina mazei (strain ATCC BAA-159 / DSM 3647 / Goe1 / Go1 / JCM 11833 / OCM 88) (Methanosarcina frisia).